A 206-amino-acid chain; its full sequence is Large ribosomal subunit protein eL13z (206 aa).

The interval 185–206 (TNKRHAGARAKRAAEAEKEEKK) is disordered. A compositionally biased stretch (basic residues) spans 186 to 195 (NKRHAGARAK). Positions 196-206 (RAAEAEKEEKK) are enriched in basic and acidic residues.

Belongs to the eukaryotic ribosomal protein eL13 family.

It is found in the cytoplasm. The protein is Large ribosomal subunit protein eL13z (RPL13B) of Arabidopsis thaliana (Mouse-ear cress).